The primary structure comprises 295 residues: Release factor glutamine methyltransferase (295 aa).

S-adenosyl-L-methionine contacts are provided by residues 127-131 (GTGSG), Asp150, Phe179, and Asn195. 195–198 (NPPY) is a substrate binding site.

It belongs to the protein N5-glutamine methyltransferase family. PrmC subfamily.

The enzyme catalyses L-glutaminyl-[peptide chain release factor] + S-adenosyl-L-methionine = N(5)-methyl-L-glutaminyl-[peptide chain release factor] + S-adenosyl-L-homocysteine + H(+). Functionally, methylates the class 1 translation termination release factors RF1/PrfA and RF2/PrfB on the glutamine residue of the universally conserved GGQ motif. In Nitratidesulfovibrio vulgaris (strain ATCC 29579 / DSM 644 / CCUG 34227 / NCIMB 8303 / VKM B-1760 / Hildenborough) (Desulfovibrio vulgaris), this protein is Release factor glutamine methyltransferase.